Here is a 337-residue protein sequence, read N- to C-terminus: Oxidoreductase andH (337 aa).

It belongs to the NmrA-type oxidoreductase family.

It participates in secondary metabolite biosynthesis; terpenoid biosynthesis. Oxidoreductase; part of the gene cluster that mediates the biosynthesis of anditomin, a fungal meroterpenoid. The first step of the pathway is the synthesis of 3,5-dimethylorsellinic acid (DMOA) by the polyketide synthase andM. DMOA is then converted to the phthalide compound 5,7-dihydroxy-4,6-dimethylphthalide (DHDMP) by the cytochrome P450 monooxygenase andK, which is further prenylated by the prenyltransferase andD to yield farnesyl-DHDMP. Further epoxidation by the FAD-dependent monooxygenase andE leads to epoxyfarnesyl-DHDMP. The next step involves the terpene cyclase andB that converts epoxyfarnesyl-DHDMP into preandiloid A through opening of the epoxide ring followed by the cyclization of the farnesyl moiety. Preandiloid A is in turn oxidized at the C-3 hydroxyl group to yield preandiloid B by the dehydrogenase andC. The dioxygenase andA is solely responsible for the dehydrogenation of preandiloid B leading to the enone preandiloid C, as well as for the intriguing structural rearrangement to generate the bicyclo[2.2.2]octane core, transforming preandiloid C into andiconin. FAD-binding monooxygenase andJ then produces andilesin D which is reduced by dehydrogenase andI to yield andilesin A. Action of acetyltransferase andG followed by a spontaneous acetate elimination leads then to andilesin B, which is in turn substrate of the short chain dehydrogenase andH to yield andilesin C. Finally, the dioxygenase andF catalyzes the transformation of andilesin C to anditomin. This Emericella variicolor (Aspergillus stellatus) protein is Oxidoreductase andH.